Reading from the N-terminus, the 131-residue chain is Small ribosomal subunit protein uS8 (131 aa).

Belongs to the universal ribosomal protein uS8 family. Part of the 30S ribosomal subunit. Contacts proteins S5 and S12.

Functionally, one of the primary rRNA binding proteins, it binds directly to 16S rRNA central domain where it helps coordinate assembly of the platform of the 30S subunit. This is Small ribosomal subunit protein uS8 from Methylococcus capsulatus (strain ATCC 33009 / NCIMB 11132 / Bath).